The primary structure comprises 399 residues: Lipase member K (399 aa).

A signal peptide spans 1-19 (MWQLLAAACWMLLLGSMYG). The AB hydrolase-1 domain occupies 78 to 378 (PAVYLQHGLI…HYNHVDFYLG (301 aa)). The active-site Nucleophile is the Ser172. Cys246 and Cys255 form a disulfide bridge. N-linked (GlcNAc...) asparagine glycosylation is found at Asn271 and Asn327. Active-site charge relay system residues include Asp343 and His372.

The protein belongs to the AB hydrolase superfamily. Lipase family. Exclusively expressed in the epidermis within the granular keratinocytes.

The protein localises to the secreted. In terms of biological role, plays a highly specific role in the last step of keratinocyte differentiation. May have an essential function in lipid metabolism of the most differentiated epidermal layers. This chain is Lipase member K (LIPK), found in Homo sapiens (Human).